The chain runs to 198 residues: Ribonuclease HII (198 aa).

The region spanning V2–N191 is the RNase H type-2 domain. Positions 8, 9, and 100 each coordinate a divalent metal cation.

It belongs to the RNase HII family. The cofactor is Mn(2+). Requires Mg(2+) as cofactor.

The protein localises to the cytoplasm. It catalyses the reaction Endonucleolytic cleavage to 5'-phosphomonoester.. In terms of biological role, endonuclease that specifically degrades the RNA of RNA-DNA hybrids. In Desulforamulus reducens (strain ATCC BAA-1160 / DSM 100696 / MI-1) (Desulfotomaculum reducens), this protein is Ribonuclease HII.